The sequence spans 345 residues: Anthranilate phosphoribosyltransferase (345 aa).

5-phospho-alpha-D-ribose 1-diphosphate is bound by residues Gly80, 83–84 (GD), Thr88, 90–93 (NIST), 108–116 (KHGNRSVSS), and Ser120. Gly80 is an anthranilate binding site. Residue Ser92 coordinates Mg(2+). An anthranilate-binding site is contributed by Asn111. Arg166 is an anthranilate binding site. Residues Asp225 and Glu226 each contribute to the Mg(2+) site.

Belongs to the anthranilate phosphoribosyltransferase family. Homodimer. Mg(2+) serves as cofactor.

It catalyses the reaction N-(5-phospho-beta-D-ribosyl)anthranilate + diphosphate = 5-phospho-alpha-D-ribose 1-diphosphate + anthranilate. Its pathway is amino-acid biosynthesis; L-tryptophan biosynthesis; L-tryptophan from chorismate: step 2/5. In terms of biological role, catalyzes the transfer of the phosphoribosyl group of 5-phosphorylribose-1-pyrophosphate (PRPP) to anthranilate to yield N-(5'-phosphoribosyl)-anthranilate (PRA). This Acetivibrio thermocellus (strain ATCC 27405 / DSM 1237 / JCM 9322 / NBRC 103400 / NCIMB 10682 / NRRL B-4536 / VPI 7372) (Clostridium thermocellum) protein is Anthranilate phosphoribosyltransferase.